A 798-amino-acid polypeptide reads, in one-letter code: Neuroligin-1 (798 aa).

The N-terminal stretch at Met1–Ser17 is a signal peptide. Residues Tyr18 to Leu685 are Extracellular-facing. Cys86 and Cys125 are oxidised to a cystine. N-linked (GlcNAc...) asparagine glycosylation is found at Asn164, Asn292, and Asn315. Cysteines 288 and 307 form a disulfide. The tract at residues Ala636–Ala676 is disordered. Residues Pro639 to Glu652 are compositionally biased toward pro residues. Low complexity predominate over residues Leu653–Thr665. A helical transmembrane segment spans residues Gly686–Val706. The Cytoplasmic segment spans residues Arg707–Val798. A disordered region spans residues His731–Pro765.

The protein belongs to the type-B carboxylesterase/lipase family. As to quaternary structure, interacts (via extracellular domain) with isoform b of madd-4; the interaction is required for the localization to postsynaptic domains. Interacts with unc-49.

The protein resides in the cell membrane. It localises to the synapse. Its function is as follows. Probable neuronal cell surface protein thought to be involved in cell-cell-interactions by forming intercellular junctions through binding to beta-neurexins. Plays a role in the clustering of the GABA(A) receptor unc-49 at postsynaptic sites in neuromuscular junctions (NMJs) via the interaction with madd-4 and neurexin nrx-1 and is thereby required for normal GABAergic synaptic transmission. This chain is Neuroligin-1 (nlg-1), found in Caenorhabditis elegans.